The sequence spans 265 residues: R-spondin-1 (265 aa).

The signal sequence occupies residues 1–20; that stretch reads MRLGLCVVALVLSWTHIAVG. FU repeat units lie at residues 34-85 and 91-135; these read AEGS…GYFD and MNKC…GSTA. Intrachain disulfides connect Cys40/Cys47, Cys44/Cys53, Cys56/Cys75, Cys79/Cys94, Cys97/Cys105, Cys102/Cys111, Cys114/Cys125, Cys129/Cys142, Cys148/Cys190, Cys159/Cys166, and Cys199/Cys206. The N-linked (GlcNAc...) asparagine glycan is linked to Asn137. Positions 147 to 207 constitute a TSP type-1 domain; the sequence is QCEMSEWSPW…KCTVRRTPCP (61 aa). C-linked (Man) tryptophan glycosylation occurs at Trp153. Trp156 is a glycosylation site (C-linked (Man) tryptophan; by DPY19L3). Disordered stretches follow at residues 173–192 and 201–265; these read EERT…TCSD and VRRT…TWAQ. Over residues 245–257 the composition is skewed to low complexity; it reads QQQPQPGTTGPLT.

This sequence belongs to the R-spondin family. Interacts with ZNRF3; promoting indirect interaction between ZNRF3 and LGR4 and membrane clearance of ZNRF3. Identified in a complex composed of RNF43, LGR5 and RSPO1. Interacts with the extracellular domain of FZD8 and LRP6. It however does not form a ternary complex with FZD8 and LRP6. Interacts with WNT1. Binds heparin. Interacts with LGR4, LGR5 and LGR6. Interacts (via FU repeats) with KREM1. In terms of processing, C-, and N-glycosylated. N-glycosylation at Asn-137, negatively influences its secretion and enhancing effect on Wnt/beta-catenin signaling. C-mannosylation at Trp-156 by DPY19L3 is required for its secretion an regulates the enhancing activity of Wnt signaling. Expressed in the dorsal part of the neural tube on 10 and 12 dpc, especially in the boundary region between roof plate and neuroepithelium. This expression is enhanced in the rostral part. Also expressed in other tissues such as truncal region neighboring forelimbs and mesenchymal tissues around the nasal cavity.

It localises to the secreted. Its subcellular location is the nucleus. Activator of the canonical Wnt signaling pathway by acting as a ligand for LGR4-6 receptors. Upon binding to LGR4-6 (LGR4, LGR5 or LGR6), LGR4-6 associate with phosphorylated LRP6 and frizzled receptors that are activated by extracellular Wnt receptors, triggering the canonical Wnt signaling pathway to increase expression of target genes. Also regulates the canonical Wnt/beta-catenin-dependent pathway and non-canonical Wnt signaling by acting as an inhibitor of ZNRF3, an important regulator of the Wnt signaling pathway. Acts as a ligand for frizzled FZD8 and LRP6. May negatively regulate the TGF-beta pathway. Has a essential roles in ovary determination. Regulates Wnt signaling by antagonizing DKK1/KREM1-mediated internalization of LRP6 through an interaction with KREM1. The protein is R-spondin-1 (Rspo1) of Mus musculus (Mouse).